Consider the following 446-residue polypeptide: Divalent metal cation transporter MntH (446 aa).

The next 11 helical transmembrane spans lie at 32–52 (LAFL…GNWI), 59–79 (AQFG…AMLL), 107–127 (AIIF…AEVI), 139–159 (IPLI…LFIM), 168–188 (AIVG…VYIS), 205–225 (IIAN…TIMP), 264–284 (SIAF…FYGV), 303–323 (PVLG…ALLA), 355–375 (LVTR…FRGN), 381–401 (QLLV…LIPL), and 420–440 (VNIC…YLII).

Belongs to the NRAMP family.

The protein resides in the cell membrane. In terms of biological role, h(+)-stimulated, divalent metal cation uptake system. The chain is Divalent metal cation transporter MntH from Staphylococcus haemolyticus (strain JCSC1435).